Reading from the N-terminus, the 238-residue chain is DNA repair protein RecO (238 aa).

It belongs to the RecO family.

Functionally, involved in DNA repair and RecF pathway recombination. The polypeptide is DNA repair protein RecO (Anaplasma marginale (strain St. Maries)).